A 547-amino-acid chain; its full sequence is Chaperonin GroEL (547 aa).

Residues 30–33 (TLGP), Lys-51, 87–91 (DGTTT), Gly-415, 479–481 (NAA), and Asp-495 each bind ATP.

It belongs to the chaperonin (HSP60) family. Forms a cylinder of 14 subunits composed of two heptameric rings stacked back-to-back. Interacts with the co-chaperonin GroES.

It localises to the cytoplasm. The enzyme catalyses ATP + H2O + a folded polypeptide = ADP + phosphate + an unfolded polypeptide.. Functionally, together with its co-chaperonin GroES, plays an essential role in assisting protein folding. The GroEL-GroES system forms a nano-cage that allows encapsulation of the non-native substrate proteins and provides a physical environment optimized to promote and accelerate protein folding. The chain is Chaperonin GroEL from Pseudomonas syringae pv. tomato (strain ATCC BAA-871 / DC3000).